The primary structure comprises 191 residues: Abscisic acid receptor PYR1 (191 aa).

The START-like stretch occupies residues 23–176 (YQLDPGSCSS…NLQKLATVAE (154 aa)). Lysine 59 lines the abscisate pocket. Threonine 78 is modified (phosphothreonine; by CARK1). Positions 85-89 (SGLPA) match the Gate loop motif. Abscisate contacts are provided by residues 89 to 94 (ANTSTE), 116 to 122 (RLTNYKS), and glutamate 141. Positions 115 to 117 (HRL) match the Latch loop motif.

This sequence belongs to the PYR/PYL/RCAR abscisic acid intracellular receptor family. In terms of assembly, homodimer. Binds ABA on one subunit only. Interacts with HAB1, AHG3, ABI1 and ABI2 when complexed to ABA, and possibly with other PP2Cs. Binds to CARs protein in an ABA-independent manner, both at the plasma membrane and in the nucleus. Interacts directly with CAR1 and CAR4. Interacts with CARK1 in the cytosol. Interacts with AIP1 in an abscisic acid-dependent manner. Interacts with FREE1 (via N-terminus). Interacts with the E3 ubiquitin-protein ligase RSL1 at the plasma membrane. Post-translationally, ubiquitynated and degraded by the proteasome upon binding to the E3 ubiquitin-protein ligase RSL1 at the plasma membrane. Phosphorylated by CARK1 especially in response to abscisic acid (ABA); this phosphorylation promotes its stability and inhibitory ability to ABI1.

It localises to the cytoplasm. Its subcellular location is the cytosol. The protein localises to the nucleus. It is found in the cell membrane. The protein resides in the vacuole. Its function is as follows. Receptor for abscisic acid (ABA) required for ABA-mediated responses such as stomatal closure and germination inhibition. Inhibits the activity of group-A protein phosphatases type 2C (PP2Cs) when activated by ABA. Can be activated by both (-)-ABA and (+)-ABA. Promotes drought tolerance. The chain is Abscisic acid receptor PYR1 from Arabidopsis thaliana (Mouse-ear cress).